We begin with the raw amino-acid sequence, 256 residues long: Thiazole synthase (256 aa).

The Schiff-base intermediate with DXP role is filled by Lys95. Residues Gly156, 182–183 (AG), and 204–205 (NT) contribute to the 1-deoxy-D-xylulose 5-phosphate site.

Belongs to the ThiG family. As to quaternary structure, homotetramer. Forms heterodimers with either ThiH or ThiS.

It localises to the cytoplasm. It carries out the reaction [ThiS sulfur-carrier protein]-C-terminal-Gly-aminoethanethioate + 2-iminoacetate + 1-deoxy-D-xylulose 5-phosphate = [ThiS sulfur-carrier protein]-C-terminal Gly-Gly + 2-[(2R,5Z)-2-carboxy-4-methylthiazol-5(2H)-ylidene]ethyl phosphate + 2 H2O + H(+). Its pathway is cofactor biosynthesis; thiamine diphosphate biosynthesis. Functionally, catalyzes the rearrangement of 1-deoxy-D-xylulose 5-phosphate (DXP) to produce the thiazole phosphate moiety of thiamine. Sulfur is provided by the thiocarboxylate moiety of the carrier protein ThiS. In vitro, sulfur can be provided by H(2)S. The protein is Thiazole synthase of Escherichia coli (strain 55989 / EAEC).